The chain runs to 725 residues: Fatty acid oxidation complex subunit alpha (725 aa).

The enoyl-CoA hydratase/isomerase stretch occupies residues 1-189 (MLYKGDTLYL…KIGLVDGVVK (189 aa)). A substrate-binding site is contributed by aspartate 296. A 3-hydroxyacyl-CoA dehydrogenase region spans residues 311-725 (ETPKQAAVLG…RLNQPVRLVL (415 aa)). NAD(+)-binding positions include methionine 324, aspartate 343, 400–402 (VVE), lysine 407, and serine 429. Catalysis depends on histidine 450, which acts as the For 3-hydroxyacyl-CoA dehydrogenase activity. NAD(+) is bound at residue asparagine 453. Substrate is bound by residues asparagine 500 and tyrosine 660.

It in the N-terminal section; belongs to the enoyl-CoA hydratase/isomerase family. The protein in the C-terminal section; belongs to the 3-hydroxyacyl-CoA dehydrogenase family. As to quaternary structure, heterotetramer of two alpha chains (FadB) and two beta chains (FadA).

The catalysed reaction is a (3S)-3-hydroxyacyl-CoA + NAD(+) = a 3-oxoacyl-CoA + NADH + H(+). The enzyme catalyses a (3S)-3-hydroxyacyl-CoA = a (2E)-enoyl-CoA + H2O. It carries out the reaction a 4-saturated-(3S)-3-hydroxyacyl-CoA = a (3E)-enoyl-CoA + H2O. It catalyses the reaction (3S)-3-hydroxybutanoyl-CoA = (3R)-3-hydroxybutanoyl-CoA. The catalysed reaction is a (3Z)-enoyl-CoA = a 4-saturated (2E)-enoyl-CoA. The enzyme catalyses a (3E)-enoyl-CoA = a 4-saturated (2E)-enoyl-CoA. It participates in lipid metabolism; fatty acid beta-oxidation. Involved in the aerobic and anaerobic degradation of long-chain fatty acids via beta-oxidation cycle. Catalyzes the formation of 3-oxoacyl-CoA from enoyl-CoA via L-3-hydroxyacyl-CoA. It can also use D-3-hydroxyacyl-CoA and cis-3-enoyl-CoA as substrate. The protein is Fatty acid oxidation complex subunit alpha of Salmonella paratyphi A (strain ATCC 9150 / SARB42).